A 108-amino-acid chain; its full sequence is Succinate dehydrogenase assembly factor 4, mitochondrial (108 aa).

The transit peptide at 1-20 (MTPSRLPWLLSWVSATAWRA) directs the protein to the mitochondrion. Residues 31 to 108 (RKTSSSQGGK…WERKGRCIDF (78 aa)) form a disordered region. 2 stretches are compositionally biased toward basic and acidic residues: residues 52-87 (KLPE…EKGG) and 95-108 (RYGD…CIDF).

Belongs to the SDHAF4 family. Interacts with SDHA in its FAD-bound form.

Its subcellular location is the mitochondrion matrix. Functionally, plays an essential role in the assembly of succinate dehydrogenase (SDH), an enzyme complex (also referred to as respiratory complex II) that is a component of both the tricarboxylic acid (TCA) cycle and the mitochondrial electron transport chain, and which couples the oxidation of succinate to fumarate with the reduction of ubiquinone (coenzyme Q) to ubiquinol. Binds to the flavoprotein subunit SDHA in its FAD-bound form, blocking the generation of excess reactive oxygen species (ROS) and facilitating its assembly with the iron-sulfur protein subunit SDHB into the SDH catalytic dimer. This Homo sapiens (Human) protein is Succinate dehydrogenase assembly factor 4, mitochondrial.